We begin with the raw amino-acid sequence, 528 residues long: Protein spinster homolog 1 (528 aa).

A disordered region spans residues 1–49; the sequence is MAGSDTAPFLSQADDPDDGPVPGTPGLPGSTGNPKSEEPEVPDQEGLQR. Ala2 is subject to N-acetylalanine. Transmembrane regions (helical) follow at residues 50-70, 98-118, 127-147, 160-180, 187-207, 218-238, 278-298, 323-343, 357-377, 381-401, 421-441, and 465-485; these read ITGL…YINL, GLIQ…FGYL, LMCG…FIPG, VGVG…DLFV, MLSI…IAGS, WALR…FLVV, LGFT…PAFL, LIFG…GVEI, LVCA…LACA, IVAT…NWAI, FQIV…IGLI, and MLCA…AIFI. Ser518 is modified (phosphoserine).

Belongs to the major facilitator superfamily. Spinster (TC 2.A.1.49) family. Interacts with BCL2 and BCL2L1.

Its subcellular location is the lysosome membrane. It is found in the mitochondrion inner membrane. The catalysed reaction is a 1-acyl-sn-glycero-3-phosphocholine(out) + H(+)(out) = a 1-acyl-sn-glycero-3-phosphocholine(in) + H(+)(in). The enzyme catalyses 1-hexadecanoyl-sn-glycero-3-phosphocholine(out) + H(+)(out) = 1-hexadecanoyl-sn-glycero-3-phosphocholine(in) + H(+)(in). It catalyses the reaction 1-(9Z-octadecenoyl)-sn-glycero-3-phosphocholine(out) + H(+)(out) = 1-(9Z-octadecenoyl)-sn-glycero-3-phosphocholine(in) + H(+)(in). It carries out the reaction 1-(5Z,8Z,11Z,14Z-eicosatetraenoyl)-sn-glycero-3-phosphocholine(out) + H(+)(out) = 1-(5Z,8Z,11Z,14Z-eicosatetraenoyl)-sn-glycero-3-phosphocholine(in) + H(+)(in). The catalysed reaction is 1-(4Z,7Z,10Z,13Z,16Z,19Z-docosahexaenoyl)-sn-glycero-3-phosphocholine(out) + H(+)(out) = 1-(4Z,7Z,10Z,13Z,16Z,19Z-docosahexaenoyl)-sn-glycero-3-phosphocholine(in) + H(+)(in). The enzyme catalyses a 1-acyl-sn-glycero-3-phosphoethanolamine(out) + H(+)(out) = a 1-acyl-sn-glycero-3-phosphoethanolamine(in) + H(+)(in). It catalyses the reaction 1-(9Z-octadecenoyl)-sn-glycero-3-phosphoethanolamine(out) + H(+)(out) = 1-(9Z-octadecenoyl)-sn-glycero-3-phosphoethanolamine(in) + H(+)(in). It carries out the reaction 1-acyl-sn-glycero-3-phospho-(1'-sn-glycerol)(out) + H(+)(out) = 1-acyl-sn-glycero-3-phospho-(1'-sn-glycerol)(in) + H(+)(in). The catalysed reaction is 1-(9Z-octadecenoyl)-sn-glycero-3-phospho-(1'-sn-glycerol)(out) + H(+)(out) = 1-(9Z-octadecenoyl)-sn-glycero-3-phospho-(1'-sn-glycerol)(in) + H(+)(in). The enzyme catalyses a 1-O-(1Z-alkenyl)-sn-glycero-3-phosphocholine(out) + H(+)(out) = a 1-O-(1Z-alkenyl)-sn-glycero-3-phosphocholine(in) + H(+)(in). It catalyses the reaction 1-(1Z-hexadecenyl)-sn-glycero-3-phosphocholine(out) + H(+)(out) = 1-(1Z-hexadecenyl)-sn-glycero-3-phosphocholine(in) + H(+)(in). It carries out the reaction a 1-O-(1Z-alkenyl)-sn-glycero-3-phosphoethanolamine(out) + H(+)(out) = a 1-O-(1Z-alkenyl)-sn-glycero-3-phosphoethanolamine(in) + H(+)(in). The catalysed reaction is 1-O-(1Z-hexadecenyl)-sn-glycero-3-phosphoethanolamine(out) + H(+)(out) = 1-O-(1Z-hexadecenyl)-sn-glycero-3-phosphoethanolamine(in) + H(+)(in). In terms of biological role, plays a critical role in the phospholipid salvage pathway from lysosomes to the cytosol. Mediates the rate-limiting, proton-dependent, lysosomal efflux of lysophospholipids, which can then be reacylated by acyltransferases in the endoplasmic reticulum to form phospholipids. Selective for zwitterionic headgroups such as lysophosphatidylcholine (LPC) and lysophosphatidylethanolamine (LPE), can also transport lysophosphatidylglycerol (LPG), but not other anionic lysophospholipids, sphingosine, nor sphingomyelin. Transports lysophospholipids with saturated, monounsaturated, and polyunsaturated fatty acids, such as 1-hexadecanoyl-sn-glycero-3-phosphocholine, 1-(9Z-octadecenoyl)-sn-glycero-3-phosphocholine and 1-(4Z,7Z,10Z,13Z,16Z,19Z-docosahexaenoyl)-sn-glycero-3-phosphocholine, respectively. Can also transport lysoplasmalogen (LPC with a fatty alcohol) such as 1-(1Z-hexadecenyl)-sn-glycero-3-phosphocholine. Lysosomal LPC could function as intracellular signaling messenger. Essential player in lysosomal homeostasis. Crucial for cell survival under conditions of nutrient limitation. May be involved in necrotic or autophagic cell death. The protein is Protein spinster homolog 1 (SPNS1) of Homo sapiens (Human).